Consider the following 627-residue polypeptide: Pescadillo homolog (627 aa).

The 94-residue stretch at 321–414 (RLRTLFKGLK…QLLPTNKYFI (94 aa)) folds into the BRCT domain. Disordered stretches follow at residues 436 to 471 (PEEK…AVDQ), 489 to 562 (YKKY…LQAR), and 596 to 627 (FEAG…KLGK). 2 positions are modified to phosphoserine: Ser-453 and Ser-457. Acidic residues-rich tracts occupy residues 453 to 471 (SDDD…AVDQ) and 498 to 521 (VNED…EELD). The segment covering 522 to 533 (EQAKRLKEEKQK) has biased composition (basic and acidic residues). Positions 540-549 (KVHKVNKRQL) are enriched in basic residues. 2 stretches are compositionally biased toward basic and acidic residues: residues 550-559 (HKAEVDEHRL) and 596-605 (FEAGEKEARK). The span at 616–627 (AAAAAKASKLGK) shows a compositional bias: low complexity.

It belongs to the pescadillo family.

It localises to the nucleus. The protein resides in the nucleolus. The protein localises to the nucleoplasm. Its function is as follows. Required for maturation of ribosomal RNAs and formation of the large ribosomal subunit. The chain is Pescadillo homolog from Drosophila ananassae (Fruit fly).